The sequence spans 66 residues: ATP synthase protein 8 (66 aa).

The chain crosses the membrane as a helical span at residues 8–24 (PWPMVIMSMILTLFYIT). The residue at position 54 (Lys-54) is an N6-acetyllysine; alternate. N6-succinyllysine; alternate is present on Lys-54. At Lys-57 the chain carries N6-acetyllysine.

The protein belongs to the ATPase protein 8 family. F-type ATPases have 2 components, CF(1) - the catalytic core - and CF(0) - the membrane proton channel. Component of an ATP synthase complex composed of ATP5PB, ATP5MC1, ATP5F1E, ATP5PD, ATP5ME, ATP5PF, ATP5MF, MT-ATP6, MT-ATP8, ATP5F1A, ATP5F1B, ATP5F1D, ATP5F1C, ATP5PO, ATP5MG, ATP5MK and ATP5MJ. Interacts with PRICKLE3.

The protein localises to the mitochondrion membrane. Mitochondrial membrane ATP synthase (F(1)F(0) ATP synthase or Complex V) produces ATP from ADP in the presence of a proton gradient across the membrane which is generated by electron transport complexes of the respiratory chain. F-type ATPases consist of two structural domains, F(1) - containing the extramembraneous catalytic core and F(0) - containing the membrane proton channel, linked together by a central stalk and a peripheral stalk. During catalysis, ATP synthesis in the catalytic domain of F(1) is coupled via a rotary mechanism of the central stalk subunits to proton translocation. Part of the complex F(0) domain. Minor subunit located with subunit a in the membrane. The chain is ATP synthase protein 8 (MT-ATP8) from Alouatta guariba (Brown howler monkey).